The following is a 504-amino-acid chain: Probable ergothioneine transporter EgtUBC (504 aa).

The region spanning 19–198 (MIEHIQISFI…LLAIIFDLIL (180 aa)) is the ABC transmembrane type-1 domain. 6 helical membrane-spanning segments follow: residues 25–45 (ISFI…ILLT), 49–69 (TISE…SLAL), 70–90 (LGLM…ALVV), 145–165 (AMVL…GGLG), 178–198 (SLIL…DLIL), and 209–229 (LLMT…IPMF). The segment at 231-504 (QKGDKITLAG…DYLKAKGLIK (274 aa)) is ergothioneine binding domain.

It in the N-terminal section; belongs to the binding-protein-dependent transport system permease family. In the C-terminal section; belongs to the OsmX family. As to quaternary structure, the complex is probably composed of at least an ATP-binding protein (EgtUA) and a transmembrane protein (EgtUBC).

The protein localises to the membrane. Its function is as follows. Part of an ABC transporter complex EgtU required for the uptake of ergothioneine (EGT), a natural low-molecular weight (LMW) thiol antioxidant. Responsible for the translocation of the substrate across the membrane. Also contains a C-terminal periplasmic solute-binding domain (SBD) which binds to EGT with sub-micromolar affinity. Probably does not bind L-hercynine. The sequence is that of Probable ergothioneine transporter EgtUBC (egtUBC) from Staphylococcus aureus (strain USA300).